The chain runs to 215 residues: ATP-dependent dethiobiotin synthetase BioD (215 aa).

Residue 13 to 18 (DIGKTV) coordinates ATP. Thr-17 is a Mg(2+) binding site. Lys-38 is a catalytic residue. Residue Thr-42 participates in substrate binding. Residues Asp-50, 115–118 (EGAG), and 175–176 (NH) contribute to the ATP site. The Mg(2+) site is built by Asp-50 and Glu-115.

It belongs to the dethiobiotin synthetase family. Homodimer. It depends on Mg(2+) as a cofactor.

The protein resides in the cytoplasm. It catalyses the reaction (7R,8S)-7,8-diammoniononanoate + CO2 + ATP = (4R,5S)-dethiobiotin + ADP + phosphate + 3 H(+). Its pathway is cofactor biosynthesis; biotin biosynthesis; biotin from 7,8-diaminononanoate: step 1/2. In terms of biological role, catalyzes a mechanistically unusual reaction, the ATP-dependent insertion of CO2 between the N7 and N8 nitrogen atoms of 7,8-diaminopelargonic acid (DAPA, also called 7,8-diammoniononanoate) to form a ureido ring. The polypeptide is ATP-dependent dethiobiotin synthetase BioD (Neisseria meningitidis serogroup C (strain 053442)).